Here is a 453-residue protein sequence, read N- to C-terminus: Phosphatidylserine decarboxylase proenzyme 1, mitochondrial (453 aa).

The transit peptide at 1 to 29 (MKPRFPQNVYFLARYSYLRRFQHSQRRTF) directs the protein to the mitochondrion. Residues 30 to 74 (SSFLNNIRSNYSGARASPLGGSSGAGAGAGGGGTGDSKGNAFLVP) are Mitochondrial matrix-facing. The chain crosses the membrane as a helical span at residues 75 to 93 (GATMATILMLGALHARRLY). Over 94 to 453 (EDKKIEEKRE…GQALGRWKEE (360 aa)) the chain is Mitochondrial intermembrane. Active-site charge relay system; for autoendoproteolytic cleavage activity residues include Asp-199, His-296, and Ser-408. Ser-408 functions as the Schiff-base intermediate with substrate; via pyruvic acid; for decarboxylase activity in the catalytic mechanism. Residue Ser-408 is modified to Pyruvic acid (Ser); by autocatalysis.

This sequence belongs to the phosphatidylserine decarboxylase family. PSD-B subfamily. Eukaryotic type I sub-subfamily. Heterodimer of a large membrane-associated beta subunit and a small pyruvoyl-containing alpha subunit. The cofactor is pyruvate. In terms of processing, is synthesized initially as an inactive proenzyme. Formation of the active enzyme involves a self-maturation process in which the active site pyruvoyl group is generated from an internal serine residue via an autocatalytic post-translational modification. Two non-identical subunits are generated from the proenzyme in this reaction, and the pyruvate is formed at the N-terminus of the alpha chain, which is derived from the carboxyl end of the proenzyme. The autoendoproteolytic cleavage occurs by a canonical serine protease mechanism, in which the side chain hydroxyl group of the serine supplies its oxygen atom to form the C-terminus of the beta chain, while the remainder of the serine residue undergoes an oxidative deamination to produce ammonia and the pyruvoyl prosthetic group on the alpha chain. During this reaction, the Ser that is part of the protease active site of the proenzyme becomes the pyruvoyl prosthetic group, which constitutes an essential element of the active site of the mature decarboxylase. As to expression, expressed in roots, leaves, stems and flowers.

It localises to the mitochondrion. Its subcellular location is the mitochondrion inner membrane. It carries out the reaction a 1,2-diacyl-sn-glycero-3-phospho-L-serine + H(+) = a 1,2-diacyl-sn-glycero-3-phosphoethanolamine + CO2. It functions in the pathway phospholipid metabolism; phosphatidylethanolamine biosynthesis; phosphatidylethanolamine from CDP-diacylglycerol: step 2/2. In terms of biological role, catalyzes the formation of phosphatidylethanolamine (PtdEtn) from phosphatidylserine (PtdSer). Plays a central role in phospholipid metabolism and in the interorganelle trafficking of phosphatidylserine. Contributes only to a minor proportion of PtdEtn production. This is Phosphatidylserine decarboxylase proenzyme 1, mitochondrial (PSD1) from Arabidopsis thaliana (Mouse-ear cress).